We begin with the raw amino-acid sequence, 633 residues long: UvrABC system protein C (633 aa).

The GIY-YIG domain occupies proline 37–isoleucine 115. The 36-residue stretch at asparagine 225–valine 260 folds into the UVR domain.

This sequence belongs to the UvrC family. Interacts with UvrB in an incision complex.

Its subcellular location is the cytoplasm. Functionally, the UvrABC repair system catalyzes the recognition and processing of DNA lesions. UvrC both incises the 5' and 3' sides of the lesion. The N-terminal half is responsible for the 3' incision and the C-terminal half is responsible for the 5' incision. This Maricaulis maris (strain MCS10) (Caulobacter maris) protein is UvrABC system protein C.